A 269-amino-acid chain; its full sequence is Formamidopyrimidine-DNA glycosylase (269 aa).

Residue proline 2 is the Schiff-base intermediate with DNA of the active site. Glutamate 3 serves as the catalytic Proton donor. Lysine 57 serves as the catalytic Proton donor; for beta-elimination activity. Histidine 90, arginine 109, and lysine 150 together coordinate DNA. Residues 235–269 form an FPG-type zinc finger; that stretch reads QVYGRKGEPCRVCGTPIVATKHAQRATFYCRQCQK. The Proton donor; for delta-elimination activity role is filled by arginine 259.

It belongs to the FPG family. In terms of assembly, monomer. Zn(2+) is required as a cofactor.

It catalyses the reaction Hydrolysis of DNA containing ring-opened 7-methylguanine residues, releasing 2,6-diamino-4-hydroxy-5-(N-methyl)formamidopyrimidine.. The catalysed reaction is 2'-deoxyribonucleotide-(2'-deoxyribose 5'-phosphate)-2'-deoxyribonucleotide-DNA = a 3'-end 2'-deoxyribonucleotide-(2,3-dehydro-2,3-deoxyribose 5'-phosphate)-DNA + a 5'-end 5'-phospho-2'-deoxyribonucleoside-DNA + H(+). In terms of biological role, involved in base excision repair of DNA damaged by oxidation or by mutagenic agents. Acts as a DNA glycosylase that recognizes and removes damaged bases. Has a preference for oxidized purines, such as 7,8-dihydro-8-oxoguanine (8-oxoG). Has AP (apurinic/apyrimidinic) lyase activity and introduces nicks in the DNA strand. Cleaves the DNA backbone by beta-delta elimination to generate a single-strand break at the site of the removed base with both 3'- and 5'-phosphates. The sequence is that of Formamidopyrimidine-DNA glycosylase from Shigella dysenteriae serotype 1 (strain Sd197).